A 415-amino-acid polypeptide reads, in one-letter code: Sphingomyelin synthase-related protein 1 (415 aa).

An SAM domain is found at 12-78 (WTTKHVAVWL…MLSVRKLQKI (67 aa)). The next 4 helical transmembrane spans lie at 153 to 173 (ILSC…MVIV), 201 to 221 (FAMT…VLLL), 232 to 252 (LCSL…VTSL), and 277 to 297 (FAIW…GDYM). Histidine 301 is a catalytic residue. Residues 322–342 (FLHTLSWVLNLFGIFFILAAH) traverse the membrane as a helical segment. Residues histidine 344 and aspartate 348 contribute to the active site. A helical membrane pass occupies residues 347–367 (IDVFIAFYITTRLFLYYHTLA). Over 368–415 (NTRAYQQSRRARIWFPMFSFFECNVNGTVPNEYCWPFSKPAIMKRLIG) the chain is Cytoplasmic.

This sequence belongs to the sphingomyelin synthase family.

It localises to the endoplasmic reticulum membrane. The enzyme catalyses an N-acylsphing-4-enine + a 1,2-diacyl-sn-glycero-3-phosphoethanolamine = an N-acylsphing-4-enine 1-phosphoethanolamine + a 1,2-diacyl-sn-glycerol. It catalyses the reaction an N-acylsphinganine + a 1,2-diacyl-sn-glycero-3-phosphoethanolamine = an N-acylsphinganine-1-phosphoethanolamine + a 1,2-diacyl-sn-glycerol. It carries out the reaction an N-acyl-(4R)-4-hydroxysphinganine + a 1,2-diacyl-sn-glycero-3-phosphoethanolamine = an N-acyl-(4R)-4-hydroxysphinganine-1-phosphoethanolamine + a 1,2-diacyl-sn-glycerol. The catalysed reaction is N-hexadecanoylsphinganine + a 1,2-diacyl-sn-glycero-3-phosphoethanolamine = N-hexadecanoyl-sphinganine-1-phosphoethanolamine + a 1,2-diacyl-sn-glycerol. The enzyme catalyses N-hexadecanoyl-(4R)-hydroxysphinganine + a 1,2-diacyl-sn-glycero-3-phosphoethanolamine = N-hexadecanoyl-(4R)-hydroxysphinganine-1-phosphoethanolamine + a 1,2-diacyl-sn-glycerol. The protein operates within sphingolipid metabolism. Synthesizes sphingolipids through transfer of a phosphatidyl head group from a glycerophospholipid on to the primary hydroxyl of a ceramide in the lumen of the endoplasmic reticulum. Catalyzes the synthesis of ceramide phosphoethanolamines (CPEs) (such as N-acylsphing-4-enine 1-phosphoethanolamine) by transferring phosphoethanolamine head group, which is smaller and more hydrophilic than the phosphocholine (PC) headgroup transferred in the canonical sphingomyelin synthesis (SMS) reaction by SMS1 or SMS2, from a phosphatidylethanolamine (1,2-diacyl-sn-glycero-3-phosphoethanolamine, PE) to a ceramide (such as N-acylsphing-4-enine). The larger PC prevents an efficient fit in the enzyme's catalytic pocket, leading to little or no SMS activity. In vitro, in the absence of ceramide, it has PLC activity with preference for phosphatidylinositol and phosphatidic acid, but also hydrolyzes phosphatidylethanolamine. This chain is Sphingomyelin synthase-related protein 1, found in Homo sapiens (Human).